Consider the following 340-residue polypeptide: Phosphate acyltransferase (340 aa).

It belongs to the PlsX family. As to quaternary structure, homodimer. Probably interacts with PlsY.

Its subcellular location is the cytoplasm. It carries out the reaction a fatty acyl-[ACP] + phosphate = an acyl phosphate + holo-[ACP]. It participates in lipid metabolism; phospholipid metabolism. In terms of biological role, catalyzes the reversible formation of acyl-phosphate (acyl-PO(4)) from acyl-[acyl-carrier-protein] (acyl-ACP). This enzyme utilizes acyl-ACP as fatty acyl donor, but not acyl-CoA. The chain is Phosphate acyltransferase from Trichodesmium erythraeum (strain IMS101).